A 294-amino-acid chain; its full sequence is ATP phosphoribosyltransferase (294 aa).

It belongs to the ATP phosphoribosyltransferase family. Long subfamily. Requires Mg(2+) as cofactor.

The protein resides in the cytoplasm. It carries out the reaction 1-(5-phospho-beta-D-ribosyl)-ATP + diphosphate = 5-phospho-alpha-D-ribose 1-diphosphate + ATP. Its pathway is amino-acid biosynthesis; L-histidine biosynthesis; L-histidine from 5-phospho-alpha-D-ribose 1-diphosphate: step 1/9. With respect to regulation, feedback inhibited by histidine. Its function is as follows. Catalyzes the condensation of ATP and 5-phosphoribose 1-diphosphate to form N'-(5'-phosphoribosyl)-ATP (PR-ATP). Has a crucial role in the pathway because the rate of histidine biosynthesis seems to be controlled primarily by regulation of HisG enzymatic activity. This chain is ATP phosphoribosyltransferase, found in Chlorobaculum parvum (strain DSM 263 / NCIMB 8327) (Chlorobium vibrioforme subsp. thiosulfatophilum).